The following is a 141-amino-acid chain: Ribonuclease VapC38 (141 aa).

2 residues coordinate Mg(2+): Asp5 and Asp102.

It belongs to the PINc/VapC protein family. The cofactor is Mg(2+).

It is found in the secreted. Functionally, toxic component of a type II toxin-antitoxin (TA) system. An RNase. Its cognate antitoxin is VapB38. In Mycobacterium tuberculosis (strain ATCC 25618 / H37Rv), this protein is Ribonuclease VapC38.